A 343-amino-acid polypeptide reads, in one-letter code: Ferredoxin--NADP reductase (343 aa).

FAD is bound by residues cysteine 18, aspartate 37, glutamine 45, tyrosine 50, valine 90, phenylalanine 125, aspartate 290, and threonine 331.

The protein belongs to the ferredoxin--NADP reductase type 2 family. Homodimer. FAD serves as cofactor.

The catalysed reaction is 2 reduced [2Fe-2S]-[ferredoxin] + NADP(+) + H(+) = 2 oxidized [2Fe-2S]-[ferredoxin] + NADPH. The protein is Ferredoxin--NADP reductase of Parvibaculum lavamentivorans (strain DS-1 / DSM 13023 / NCIMB 13966).